The chain runs to 254 residues: 3-deoxy-manno-octulosonate cytidylyltransferase (254 aa).

The protein belongs to the KdsB family.

Its subcellular location is the cytoplasm. The enzyme catalyses 3-deoxy-alpha-D-manno-oct-2-ulosonate + CTP = CMP-3-deoxy-beta-D-manno-octulosonate + diphosphate. Its pathway is nucleotide-sugar biosynthesis; CMP-3-deoxy-D-manno-octulosonate biosynthesis; CMP-3-deoxy-D-manno-octulosonate from 3-deoxy-D-manno-octulosonate and CTP: step 1/1. It participates in bacterial outer membrane biogenesis; lipopolysaccharide biosynthesis. Activates KDO (a required 8-carbon sugar) for incorporation into bacterial lipopolysaccharide in Gram-negative bacteria. This is 3-deoxy-manno-octulosonate cytidylyltransferase from Pseudomonas fluorescens (strain ATCC BAA-477 / NRRL B-23932 / Pf-5).